The primary structure comprises 246 residues: Mediator of RNA polymerase II transcription subunit 6 (246 aa).

Disordered regions lie at residues 165-186 and 207-246; these read MKKK…RSTN and EALE…ATTK. Composition is skewed to basic and acidic residues over residues 166-184 and 208-224; these read KKKE…EERS and ALEK…KPEE.

It belongs to the Mediator complex subunit 6 family. As to quaternary structure, component of the Mediator complex. Interacts with let-19/mdt-13. Interacts with RNA polymerase II. Interacts with mdt-28.

It localises to the nucleus. Functionally, component of the Mediator complex, a coactivator involved in the regulated transcription of nearly all RNA polymerase II-dependent genes. Mediator functions as a bridge to convey information from gene-specific regulatory proteins to the basal RNA polymerase II transcription machinery. Mediator is recruited to promoters by direct interactions with regulatory proteins and serves as a scaffold for the assembly of a functional preinitiation complex with RNA polymerase II and the general transcription factors. This is Mediator of RNA polymerase II transcription subunit 6 (mdt-6) from Caenorhabditis briggsae.